Here is a 216-residue protein sequence, read N- to C-terminus: Probable ubiquitin-conjugating enzyme E2 ECU01_1010 (216 aa).

A compositionally biased stretch (basic residues) spans 1–10; the sequence is MFKPSAHRRL. Residues 1–29 form a disordered region; sequence MFKPSAHRRLPREDDIIQEDDEDGPLWPS. Positions 29 to 196 constitute a UBC core domain; it reads SALRRLSNEE…VIRIAREEDE (168 aa). C120 acts as the Glycyl thioester intermediate in catalysis.

It belongs to the ubiquitin-conjugating enzyme family.

It carries out the reaction S-ubiquitinyl-[E1 ubiquitin-activating enzyme]-L-cysteine + [E2 ubiquitin-conjugating enzyme]-L-cysteine = [E1 ubiquitin-activating enzyme]-L-cysteine + S-ubiquitinyl-[E2 ubiquitin-conjugating enzyme]-L-cysteine.. Its pathway is protein modification; protein ubiquitination. In terms of biological role, catalyzes the covalent attachment of ubiquitin to other proteins so as to signal them for selective protein degradation. Involved in the formation of multiubiquitin chains. The chain is Probable ubiquitin-conjugating enzyme E2 ECU01_1010 from Encephalitozoon cuniculi (strain GB-M1) (Microsporidian parasite).